The following is a 71-amino-acid chain: Small ribosomal subunit protein bS21 (71 aa).

A disordered region spans residues 48–71 (ENATLAKRHAKRNARENARNTRLY). Over residues 60-71 (NARENARNTRLY) the composition is skewed to basic and acidic residues.

The protein belongs to the bacterial ribosomal protein bS21 family.

This Haemophilus influenzae (strain 86-028NP) protein is Small ribosomal subunit protein bS21.